A 322-amino-acid chain; its full sequence is UDP-N-acetylenolpyruvoylglucosamine reductase (322 aa).

Residues 36–202 (RAGGPAQVLF…TSVLFEGVPG (167 aa)) enclose the FAD-binding PCMH-type domain. R182 is a catalytic residue. The Proton donor role is filled by S231. E301 is a catalytic residue.

It belongs to the MurB family. FAD serves as cofactor.

Its subcellular location is the cytoplasm. It carries out the reaction UDP-N-acetyl-alpha-D-muramate + NADP(+) = UDP-N-acetyl-3-O-(1-carboxyvinyl)-alpha-D-glucosamine + NADPH + H(+). It participates in cell wall biogenesis; peptidoglycan biosynthesis. Its function is as follows. Cell wall formation. This is UDP-N-acetylenolpyruvoylglucosamine reductase from Brucella suis (strain ATCC 23445 / NCTC 10510).